A 206-amino-acid polypeptide reads, in one-letter code: FMN-dependent NADH:quinone oxidoreductase 2 (206 aa).

FMN is bound by residues S10, 16 to 18 (SYS), and 140 to 143 (SCGG).

This sequence belongs to the azoreductase type 1 family. As to quaternary structure, homodimer. The cofactor is FMN.

It carries out the reaction 2 a quinone + NADH + H(+) = 2 a 1,4-benzosemiquinone + NAD(+). The catalysed reaction is N,N-dimethyl-1,4-phenylenediamine + anthranilate + 2 NAD(+) = 2-(4-dimethylaminophenyl)diazenylbenzoate + 2 NADH + 2 H(+). Its function is as follows. Quinone reductase that provides resistance to thiol-specific stress caused by electrophilic quinones. In terms of biological role, also exhibits azoreductase activity. Catalyzes the reductive cleavage of the azo bond in aromatic azo compounds to the corresponding amines. The protein is FMN-dependent NADH:quinone oxidoreductase 2 of Cupriavidus pinatubonensis (strain JMP 134 / LMG 1197) (Cupriavidus necator (strain JMP 134)).